We begin with the raw amino-acid sequence, 60 residues long: Large ribosomal subunit protein uL30 (60 aa).

This sequence belongs to the universal ribosomal protein uL30 family. In terms of assembly, part of the 50S ribosomal subunit.

This chain is Large ribosomal subunit protein uL30, found in Symbiobacterium thermophilum (strain DSM 24528 / JCM 14929 / IAM 14863 / T).